The following is a 463-amino-acid chain: Chaperone SurA (463 aa).

A signal peptide spans 1-25 (MTKPFSVVLASLLAITSTISPLASA). 2 consecutive PpiC domains span residues 174-276 (GSKY…KLME) and 289-388 (VTEY…QRVG). Disordered stretches follow at residues 329–348 (ATAK…GDLG) and 434–463 (GDRA…KPTR). Over residues 439-452 (NNATAAPAKSADPA) the composition is skewed to low complexity. The span at 453–463 (LPAPPPAKPTR) shows a compositional bias: pro residues.

The protein localises to the periplasm. It catalyses the reaction [protein]-peptidylproline (omega=180) = [protein]-peptidylproline (omega=0). In terms of biological role, chaperone involved in the correct folding and assembly of outer membrane proteins. Recognizes specific patterns of aromatic residues and the orientation of their side chains, which are found more frequently in integral outer membrane proteins. May act in both early periplasmic and late outer membrane-associated steps of protein maturation. The sequence is that of Chaperone SurA from Xanthomonas oryzae pv. oryzae (strain KACC10331 / KXO85).